Reading from the N-terminus, the 361-residue chain is Ribosomal RNA large subunit methyltransferase M (361 aa).

Residues S187, 220–223, D239, D259, and D276 each bind S-adenosyl-L-methionine; that span reads CPGG. K305 serves as the catalytic Proton acceptor.

This sequence belongs to the class I-like SAM-binding methyltransferase superfamily. RNA methyltransferase RlmE family. RlmM subfamily. As to quaternary structure, monomer.

It localises to the cytoplasm. It catalyses the reaction cytidine(2498) in 23S rRNA + S-adenosyl-L-methionine = 2'-O-methylcytidine(2498) in 23S rRNA + S-adenosyl-L-homocysteine + H(+). Its function is as follows. Catalyzes the 2'-O-methylation at nucleotide C2498 in 23S rRNA. This is Ribosomal RNA large subunit methyltransferase M from Shewanella sp. (strain MR-7).